The following is a 311-amino-acid chain: NEDD4 family-interacting protein 2 (311 aa).

The disordered stretch occupies residues 1 to 133 (RRSASDAELS…PPYSSITVEA (133 aa)). The Cytoplasmic segment spans residues 1 to 206 (RRSASDAELS…VEQLRVGNDG (206 aa)). Residues 7-22 (AELSAGAEGATGSEAA) show a composition bias toward low complexity. The segment covering 26-37 (DLGGRTRGGGRG) has biased composition (gly residues). Positions 38–47 (SAAAAATTST) are enriched in low complexity. The segment covering 48–75 (REAEGAERRGDTPARKPDPEAGRMDHHQ) has biased composition (basic and acidic residues). Over residues 92–101 (ESSAVEQPST) the composition is skewed to polar residues. The span at 102-120 (SSLAAPTVEAAASAPALDP) shows a compositional bias: low complexity. The tract at residues 123 to 126 (PPPY) is interaction with NEDD4. Positions 123 to 126 (PPPY) match the PPxY motif 1 motif. A phosphotyrosine; by SRC mark is found at tyrosine 126, tyrosine 142, tyrosine 146, and tyrosine 152. 2 consecutive short sequence motifs (PPxY motif) follow at residues 149-152 (PPPY) and 159-161 (PTY). A helical transmembrane segment spans residues 207-227 (IFMLAFFMAFIFNWLGFCLSF). Residues 228 to 232 (CITNT) are Extracellular-facing. The helical transmembrane segment at 233-253 (IAGRYGAICGFGLSLIKWILI) threads the bilayer. Residues 254 to 262 (VRFSDYFTG) lie on the Cytoplasmic side of the membrane. Residues 263-283 (YFNGQYWLWWIFLVLGLLLFF) traverse the membrane as a helical segment. Over 284–311 (RGFVNYLKVRNMSESMAAAHRTRYFFLL) the chain is Extracellular.

As to quaternary structure, forms heterodimers with NDFIP1. Interacts with HECT domain-containing E3 ubiquitin-protein ligases, including NEDD4. Interacts with NEDD4L. When phosphorylated at Tyr-142, interacts with SRC and LYN SH2 domain. May thus act as a scaffold that recruits SRC to NDFIP1, enhancing NDFIP1 phosphorylation. Interacts with SLC11A2/DMT1. May interact with phosphorylated EGFR. Interacts with KCNH2. Ubiquitinated by NEDD4 and NEDD4L; which does not affect turnover. Also ubiquitinated by ITCH. In terms of processing, undergoes transient tyrosine-phosphorylation following EGF stimulation, most probably catalyzed by SRC. Phosphorylation on Tyr-126, Tyr-146 and Tyr-152 are dependent on the phosphorylation on Tyr-142. Also phosphorylated by LYN and FYN. Ubiquitously expressed, with highest levels in brain, liver, kidney and testis.

Its subcellular location is the endosome membrane. It is found in the golgi apparatus membrane. The protein localises to the endosome. The protein resides in the multivesicular body membrane. In terms of biological role, activates HECT domain-containing E3 ubiquitin-protein ligases, including ITCH, NEDD4, NEDD4L, SMURF2, WWP1 and WWP2, and consequently modulates the stability of their targets. As a result, may control many cellular processes. Recruits ITCH, NEDD4 and SMURF2 to endosomal membranes. Negatively regulates KCNH2 potassium channel activity by decreasing its cell-surface expression and interfering with channel maturation through recruitment of NEDD4L to the Golgi apparatus and multivesicular body where it mediates KCNH2 degradation. May modulate EGFR signaling. Together with NDFIP1, limits the cytokine signaling and expansion of effector Th2 T-cells by promoting degradation of JAK1, probably by ITCH- and NEDD4L-mediated ubiquitination. This is NEDD4 family-interacting protein 2 (Ndfip2) from Mus musculus (Mouse).